The primary structure comprises 578 residues: Arginine--tRNA ligase (578 aa).

The 'HIGH' region signature appears at 122–132; that stretch reads PNVAKEMHVGH.

This sequence belongs to the class-I aminoacyl-tRNA synthetase family. As to quaternary structure, monomer.

It localises to the cytoplasm. It carries out the reaction tRNA(Arg) + L-arginine + ATP = L-arginyl-tRNA(Arg) + AMP + diphosphate. This Shigella sonnei (strain Ss046) protein is Arginine--tRNA ligase.